The primary structure comprises 459 residues: Serine permease SerP1 (459 aa).

12 helical membrane-spanning segments follow: residues 19 to 39 (IQLIAIAGTIGTGLFLGAGKT), 42 to 62 (MTGPSVIFAYILIGIAMFFFL), 97 to 117 (SYWLVIVFVCISELTAIGTYI), 119 to 139 (FWLPHLPLWLIEIVMLALLFG), 153 to 173 (FWFAMIKVAAILGMIVTAIIL), 212 to 232 (FVGALQMVMFAFTSMEFIGMT), 254 to 274 (ILLFYVGALLAIMAIFNWHYI), 281 to 301 (FVIVFQLIGIKWAAALINFVV), 341 to 361 (AGIPINALYMATALSLLAPVL), 370 to 390 (AFNFAASCTTNLFLVVYFITL), 412 to 432 (PTIAVPFIAIIFAIVFASLFF), and 436 to 456 (TFYPALGAIVWTLIFGLYSHF).

Belongs to the amino acid-polyamine-organocation (APC) superfamily. Amino acid transporter (AAT) (TC 2.A.3.1) family.

Its subcellular location is the cell membrane. In terms of biological role, transports L-serine, L-threonine and L-cysteine with high affinity. Stereoselective, with a strong preference for L-serine. Is the main L-serine transporter and is responsible for optimal growth in media containing free amino acids as the sole source of amino acids. Is also the main transporter for L-threonine. This Lactococcus lactis subsp. cremoris (strain MG1363) protein is Serine permease SerP1.